The primary structure comprises 178 residues: MNPRLACSTWLPLLLVLFTLDQGRANPVERGQEYRSLSKRFDDDSTELILEPRASEENGPPYQPLVPRASDENVPPAYVPLVPRASDENVPPPPLQMPLIPRASEQKGPPFNPPPFVDYEPRAANENALRKLIKRSFERSPGRNKRLSPGDGCFGQKIDRIGAVSGMGCNSVSSQGKK.

An N-terminal signal peptide occupies residues Met1–Ala25. 5 consecutive propeptides follow at residues Asn26–Asn58, Ala69–Asn73, Ala85–Asn89, Ala103–Asn112, and Ala123–Arg146. 2 disordered regions span residues Ala69–Lys107 and Arg135–Gly155. Cys153 and Cys169 are disulfide-bonded.

In the C-terminal section; belongs to the natriuretic peptide family. As to expression, expressed by the venom gland.

Its subcellular location is the secreted. In terms of biological role, helokinestatins antagonize the vasodilatory actions of bradykinin at the B2 bradykinin receptor (BDKRB2), with helokinestatin-1 being the most potent antagonist. Its function is as follows. exhibits hypotensive and vasodepressor activities, possibly by targeting natriuretic peptide receptors NPR1 and NPR2. In Heloderma suspectum cinctum (Banded Gila monster), this protein is Natriuretic and helokinestatin peptides.